The following is a 415-amino-acid chain: MASAEIIAVGTELLLGQIVNSNAAFISEELAANGIYVYHHTVVGDNPKRLKDVIDIAEKRSDILIFTGGLGPTEDDITKQILAEHLQKNLVEDAFHMNEITEYFASRNRTMTENNKLQAVIIEGSTVLNNDYGFAAGMFLKENNHTYILLPGPPSEMKPMFSSYAEPLLVSENTEKNVLESKIMRFFGIGESQLAADLNDMILAQVNPTIATYAGDNEVVVRITATAKTKEEASALVNETEQEILRRDGTFLYGYGEVSLPELVTAMLLEKNITISAAESFTAGLFQAEIARFPGISKIFKGGMVTYSEETKQSILEVSPQTIKENGVVSSECAKEMAKNVSRLCNTDIGISFTGVAGPDSLEGHPAGTIWIGLHVAGFETEAYQFVYGRDRNHNRRRAVKQGFQLIKQFLDTNK.

Belongs to the CinA family.

This chain is Putative competence-damage inducible protein, found in Listeria innocua serovar 6a (strain ATCC BAA-680 / CLIP 11262).